A 122-amino-acid chain; its full sequence is Flagellar protein FliT (122 aa).

A required for homodimerization region spans residues 1–50; that stretch reads MTSTVEFINRWQRIALLSQSLLELAQRGEWDLLLQQEVSYLQSIETVMEK. A fliD binding region spans residues 60–98; sequence IQDMVAGYIKQTLDNEQLLKGLLQQRLDELSSLIGQSTR.

This sequence belongs to the FliT family. In terms of assembly, homodimer. Interacts with FliD and FlhC.

Its subcellular location is the cytoplasm. It localises to the cytosol. Functionally, dual-function protein that regulates the transcription of class 2 flagellar operons and that also acts as an export chaperone for the filament-capping protein FliD. As a transcriptional regulator, acts as an anti-FlhDC factor; it directly binds FlhC, thus inhibiting the binding of the FlhC/FlhD complex to class 2 promoters, resulting in decreased expression of class 2 flagellar operons. As a chaperone, effects FliD transition to the membrane by preventing its premature polymerization, and by directing it to the export apparatus. The polypeptide is Flagellar protein FliT (Salmonella gallinarum (strain 287/91 / NCTC 13346)).